We begin with the raw amino-acid sequence, 58 residues long: Ribosome modulation factor (58 aa).

The disordered stretch occupies residues 1-28; it reads MKRQKRDRFERAHTQGFKAGLHGRSKDN.

It belongs to the ribosome modulation factor family.

The protein localises to the cytoplasm. During stationary phase, converts 70S ribosomes to an inactive dimeric form (100S ribosomes). The polypeptide is Ribosome modulation factor (Idiomarina loihiensis (strain ATCC BAA-735 / DSM 15497 / L2-TR)).